Here is a 390-residue protein sequence, read N- to C-terminus: Deoxyhypusine synthase-like protein (390 aa).

It belongs to the deoxyhypusine synthase family.

This is Deoxyhypusine synthase-like protein from Nostoc punctiforme (strain ATCC 29133 / PCC 73102).